The primary structure comprises 111 residues: Nucleoid-associated protein CYB_2894 (111 aa).

Belongs to the YbaB/EbfC family. In terms of assembly, homodimer.

It localises to the cytoplasm. Its subcellular location is the nucleoid. In terms of biological role, binds to DNA and alters its conformation. May be involved in regulation of gene expression, nucleoid organization and DNA protection. In Synechococcus sp. (strain JA-2-3B'a(2-13)) (Cyanobacteria bacterium Yellowstone B-Prime), this protein is Nucleoid-associated protein CYB_2894.